The primary structure comprises 1185 residues: Ovostatin homolog 1 (1185 aa).

The signal sequence occupies residues 1–21; it reads MHVHVCVCLCVCIYTSSCVCA. N-linked (GlcNAc...) asparagine glycosylation is found at N80, N155, N347, N452, and N725.

The protein belongs to the protease inhibitor I39 (alpha-2-macroglobulin) family. In terms of assembly, homotetramer.

Its subcellular location is the secreted. In terms of biological role, is able to inhibit all four classes of proteinases by a unique 'trapping' mechanism. This Homo sapiens (Human) protein is Ovostatin homolog 1 (OVOS1).